The chain runs to 579 residues: Insulin-like growth factor 2 mRNA-binding protein 3 (579 aa).

RRM domains are found at residues Asn2–Pro75 and Arg81–Asp156. The tract at residues Ala160–Lys192 is disordered. A compositionally biased stretch (low complexity) spans Arg177–Ser187. Residue Ser184 is modified to Phosphoserine. 3 KH domains span residues Asp195–Ile260, Glu276–Ile343, and Thr405–Ile470. Residues Lys450 and Lys475 each participate in a glycyl lysine isopeptide (Lys-Gly) (interchain with G-Cter in SUMO2) cross-link. The 67-residue stretch at Lys487–Ile553 folds into the KH 4 domain. A Phosphothreonine modification is found at Thr528.

The protein belongs to the RRM IMP/VICKZ family. In terms of assembly, can form homooligomers and heterooligomers with IGF2BP1 and IGF2BP3 in an RNA-dependent manner. Interacts with IGF2BP1. Interacts with ELAVL1, DHX9, HNRNPU, MATR3 and PABPC1. Expressed in fetal liver, fetal lung, fetal kidney, fetal thymus, fetal placenta, fetal follicles of ovary and gonocytes of testis, growing oocytes, spermatogonia and semen (at protein level). Expressed in cervix adenocarcinoma, in testicular, pancreatic and renal-cell carcinomas (at protein level). Expressed ubiquitously during fetal development at 8 and 14 weeks of gestation. Expressed in ovary, testis, brain, placenta, pancreatic cancer tissues and pancreatic cancer cell lines.

The protein resides in the nucleus. It localises to the cytoplasm. It is found in the P-body. The protein localises to the stress granule. Functionally, RNA-binding factor that may recruit target transcripts to cytoplasmic protein-RNA complexes (mRNPs). This transcript 'caging' into mRNPs allows mRNA transport and transient storage. It also modulates the rate and location at which target transcripts encounter the translational apparatus and shields them from endonuclease attacks or microRNA-mediated degradation. Preferentially binds to N6-methyladenosine (m6A)-containing mRNAs and increases their stability. Binds to the 3'-UTR of CD44 mRNA and stabilizes it, hence promotes cell adhesion and invadopodia formation in cancer cells. Binds to beta-actin/ACTB and MYC transcripts. Increases MYC mRNA stability by binding to the coding region instability determinant (CRD) and binding is enhanced by m6A-modification of the CRD. Binds to the 5'-UTR of the insulin-like growth factor 2 (IGF2) mRNAs. This Homo sapiens (Human) protein is Insulin-like growth factor 2 mRNA-binding protein 3 (IGF2BP3).